Reading from the N-terminus, the 366-residue chain is tRNA-queuosine alpha-mannosyltransferase (366 aa).

This sequence belongs to the glycosyltransferase group 1 family. Glycosyltransferase 4 subfamily.

It localises to the cytoplasm. The protein localises to the nucleus. The catalysed reaction is queuosine(34) in tRNA(Asp) + GDP-alpha-D-mannose = O-4''-alpha-D-mannosylqueuosine(34) in tRNA(Asp) + GDP + H(+). Glycosyltransferase that specifically catalyzes mannosylation of cytoplasmic tRNA(Asp) modified with queuosine at position 34 (queuosine(34)). Mannosylates the cyclopentene moiety of queuosine(34) in tRNA(Asp) to form mannosyl-queuosine(34). Mannosylation of queuosine(34) in tRNA(Asp) is required to slow-down elongation at cognate codons, GAC and GAU, thereby regulating protein translation. The chain is tRNA-queuosine alpha-mannosyltransferase (GTDC1) from Bos taurus (Bovine).